Reading from the N-terminus, the 141-residue chain is UPF0225 protein Rmet_0111 (141 aa).

It belongs to the UPF0225 family.

This is UPF0225 protein Rmet_0111 from Cupriavidus metallidurans (strain ATCC 43123 / DSM 2839 / NBRC 102507 / CH34) (Ralstonia metallidurans).